A 585-amino-acid polypeptide reads, in one-letter code: Mitochondrial sodium/calcium exchanger protein (585 aa).

A signal peptide spans 1–26; that stretch reads MAGRWLDPLWAPGFLCVALILETASG. Residues 27-95 lie on the Extracellular side of the membrane; sequence AGDLSTKAHG…GIFCYFPPNL (69 aa). N-linked (GlcNAc...) asparagine glycosylation is present at N46. Residues 96–116 traverse the membrane as a helical segment; sequence LPLAITLYVFWLLYLFLILGV. At 117 to 140 the chain is on the cytoplasmic side; sequence TAAKFFCPNLSAISTSLKLSHNVA. A helical transmembrane segment spans residues 141-161; that stretch reads GVTFLAFGNGAPDIFSALVAF. Topologically, residues 162–168 are extracellular; sequence SDPRTAG. Residues 169–189 traverse the membrane as a helical segment; the sequence is LAIGALFGAGVLVTTVVAGGI. Residues 190–205 are Cytoplasmic-facing; the sequence is TILRPFMAASRPFLRD. The chain crosses the membrane as a helical span at residues 206–226; sequence ITFYMVAVFLTFTALYLGRIT. Residue L227 is a topological domain, extracellular. Residues 228-247 traverse the membrane as a helical segment; sequence VWALGYLGLYVFYVVTVIIC. The Cytoplasmic segment spans residues 248–325; it reads TWVYQRQRSR…KWRTQSISCK (78 aa). S258 carries the phosphoserine; by PKA modification. The helical transmembrane segment at 326 to 346 threads the bilayer; it reads LLKVAKLPVEFLLLLTVPVVD. The Extracellular segment spans residues 347 to 360; the sequence is PDKDDRNWKRPLNC. Residues 361–381 form a helical membrane-spanning segment; the sequence is LQLVISPLVLVLTLQSGVYGI. At 382–383 the chain is on the cytoplasmic side; it reads YE. The helical transmembrane segment at 384–404 threads the bilayer; it reads IGGLLPVWAVVVIVGTALASV. Over 405-416 the chain is Extracellular; sequence TFFATSNSEPPR. Residues 417–437 form a helical membrane-spanning segment; it reads LHWLFAFLGFLTSALWINAAA. Over 438–445 the chain is Cytoplasmic; it reads TEVVNILR. A helical transmembrane segment spans residues 446–466; sequence SLGVVFRLSNTVLGLTLLAWG. At 467–491 the chain is on the extracellular side; that stretch reads NSIGDAFSDFTLARQGYPRMAFSAC. The chain crosses the membrane as a helical span at residues 492 to 512; the sequence is FGGIIFNILVGVGLGCLLQIV. Residues 513-525 lie on the Cytoplasmic side of the membrane; it reads RSHASEVKLEPDG. Residues 526-546 traverse the membrane as a helical segment; that stretch reads LLVWVLASALGLSLVFSLVSV. Topologically, residues 547 to 559 are extracellular; that stretch reads PLQCFQLSKAYGL. The chain crosses the membrane as a helical span at residues 560–580; it reads CLLLFYICFIVVVLLTEFGVI. Residues 581-585 are Cytoplasmic-facing; it reads HLKAD.

Belongs to the Ca(2+):cation antiporter (CaCA) (TC 2.A.19) family. SLC24A subfamily. In terms of processing, phosphorylation at Ser-258 by PKA prevents calcium overload. As to expression, widely expressed. Present at higher level in pancreas, stomach, skeletal muscle and skin (at protein level). Ubiquitously expressed.

The protein resides in the mitochondrion inner membrane. It carries out the reaction Ca(2+)(in) + 3 Na(+)(out) = Ca(2+)(out) + 3 Na(+)(in). The catalysed reaction is 3 Li(+)(out) + Ca(2+)(in) = 3 Li(+)(in) + Ca(2+)(out). Its activity is regulated as follows. Inhibited by the sodium/calcium exchanger inhibitor CGP-37157. Strongly inhibited by zinc. Functionally, mitochondrial sodium/calcium antiporter that mediates sodium-dependent calcium efflux from mitochondrion, by mediating the exchange of 3 sodium ions per 1 calcium ion. Plays a central role in mitochondrial calcium homeostasis by mediating mitochondrial calcium extrusion: calcium efflux is essential for mitochondrial function and cell survival, notably in cardiomyocytes. Regulates rates of glucose-dependent insulin secretion in pancreatic beta-cells during the first phase of insulin secretion: acts by mediating efflux of calcium from mitochondrion, thereby affecting cytoplasmic calcium responses. Required for store-operated Ca(2+) entry (SOCE) and Ca(2+) release-activated Ca(2+) (CRAC) channel regulation: sodium transport by SLC8B1 leads to promote calcium-shuttling that modulates mitochondrial redox status, thereby regulating SOCE activity. Involved in B-lymphocyte chemotaxis. Able to transport Ca(2+) in exchange of either Li(+) or Na(+), explaining how Li(+) catalyzes Ca(2+) exchange. In contrast to other members of the family its function is independent of K(+). The protein is Mitochondrial sodium/calcium exchanger protein of Rattus norvegicus (Rat).